The primary structure comprises 112 residues: Divalent-cation tolerance protein CutA (112 aa).

Positions 16, 83, and 84 each coordinate Cu cation.

This sequence belongs to the CutA family. In terms of assembly, homotrimer. Requires Cu cation as cofactor.

Its subcellular location is the cytoplasm. Functionally, involved in resistance toward heavy metals. In Shigella flexneri, this protein is Divalent-cation tolerance protein CutA.